The primary structure comprises 309 residues: Homoserine O-succinyltransferase (309 aa).

The Acyl-thioester intermediate role is filled by cysteine 142. Substrate-binding residues include lysine 163 and serine 192. Histidine 235 functions as the Proton acceptor in the catalytic mechanism. Glutamate 237 is a catalytic residue. Arginine 249 contacts substrate.

This sequence belongs to the MetA family. Homodimer.

Its subcellular location is the cytoplasm. It catalyses the reaction L-homoserine + succinyl-CoA = O-succinyl-L-homoserine + CoA. It participates in amino-acid biosynthesis; L-methionine biosynthesis via de novo pathway; O-succinyl-L-homoserine from L-homoserine: step 1/1. Functionally, transfers a succinyl group from succinyl-CoA to L-homoserine, forming succinyl-L-homoserine. This chain is Homoserine O-succinyltransferase, found in Escherichia coli (strain K12 / MC4100 / BW2952).